Here is a 511-residue protein sequence, read N- to C-terminus: Frizzled/smoothened-like sans CRD protein C (511 aa).

The signal sequence occupies residues 1 to 25 (MNQINKFIKNLYLIIITIILIIVIS). Over 26 to 93 (NDNNGLFING…QWESYFEMSL (68 aa)) the chain is Extracellular. N-linked (GlcNAc...) asparagine glycosylation is present at Asn51. Residues 94-114 (IMGSISMFASLFLIITYSPLI) traverse the membrane as a helical segment. The Cytoplasmic segment spans residues 115–122 (NKKHTRHT). Residues 123-143 (VGILCMSIGIFFVMVSDGRQL) form a helical membrane-spanning segment. At 144-172 (WDIESPGEYKKYCPDTGRYARQSDTKCLT) the chain is on the extracellular side. A helical membrane pass occupies residues 173-193 (TGLFFQFGCVTAIGWWSILAV). The Cytoplasmic segment spans residues 194–209 (DLWMTIAKKVQTTKKQ). A helical membrane pass occupies residues 210-230 (LLYYLIGINTVSLILTFGPVV). Topologically, residues 231 to 253 (KNQYGFGNAAIGCWMLDLKYQYG) are extracellular. A helical membrane pass occupies residues 254 to 274 (FFWIPVGICLSVGSVFIGLIF). The Cytoplasmic segment spans residues 275-295 (WEIYKISDAVKKRYLKKHIKP). A helical transmembrane segment spans residues 296-316 (LCLIVLMCLEFLYMFIYYSYI). Residues 317-357 (TANQPTYNKHVAEYIMCLIINAANVPGSYTCQLKTVSPTAQ) lie on the Extracellular side of the membrane. A helical transmembrane segment spans residues 358 to 378 (FLFLIAIRLMGLQGLIFYGLT). At 379-511 (AATKKVWANS…RVNSPDNLQP (133 aa)) the chain is on the cytoplasmic side. Residues 430–511 (NGYTTGGSDN…RVNSPDNLQP (82 aa)) form a disordered region. Over residues 433–443 (TTGGSDNGVGS) the composition is skewed to gly residues. The segment covering 451–460 (KSSSNGGAQD) has biased composition (polar residues). Over residues 461–485 (NNNNNNNNNNNNNNNNNNNNNNNNN) the composition is skewed to low complexity. Positions 486–511 (SSSLEISGVESNNSTPRVNSPDNLQP) are enriched in polar residues.

This sequence belongs to the G-protein coupled receptor Fz/Smo family.

It localises to the membrane. In Dictyostelium discoideum (Social amoeba), this protein is Frizzled/smoothened-like sans CRD protein C (fscC).